Reading from the N-terminus, the 600-residue chain is MKITEKLEQHRQTSGKPTYSFEYFVPKTTQGVQNLYDRMDRMYEASLPQFIDITWNAGGGRLSHLSTDLVATAQSVLGLETCMHLTCTNMPISMIDDALENAYHSGCQNILALRGDPPRDAENWTPVEGGFQYAKDLIKYIKSKYGDHFAIGVAGYPECHPELPNKDVKLDLEYLKQKIDAGGDFIITQMFYDVDNFINWCSQVRAAGMDVPIIPGIMPITTYAAFLRRAQWGQISIPQHFSSRLDPIKDDDELVRDIGTNLIVEMCQKLLDSGYVSHLHIYTMNLEKAPLMILERLNILPTESEFNAHPLAVLPWRKSLNPKRKNEEVRPIFWKRRPYSYVARTSQWAVDEFPNGRFGDSSSPAFGDLDLCGSDLIRQSANKCLELWSTPTSINDVAFLVINYLNGNLKCLPWSDIPINDEINPIKAHLIELNQHSIITINSQPQVNGIRSNDKIHGWGPKDGYVYQKQYLEFMLPKTKLPKLIDTLKNNEFLTYFAIDSQGDLLSNHPDNSKSNAVTWGIFPGREILQPTIVEKISFLAWKEEFYHILNEWKLNMNKYDKPHSAQFIQSLIDDYCLVNIVDNDYISPDDQIHSILLSL.

Catalysis depends on E22, which acts as the Proton donor/acceptor. Residues 22–27 and 54–55 each bind NAD(+); these read EYFVPK and TW. Residues 54-55, H84, 114-116, 133-134, Y156, D171, and K178 contribute to the FAD site; these read TW, RGD, and YA. Residue D116 coordinates substrate. Positions 189 and 282 each coordinate substrate.

This sequence belongs to the methylenetetrahydrofolate reductase family. The cofactor is FAD.

It carries out the reaction (6S)-5-methyl-5,6,7,8-tetrahydrofolate + NADP(+) = (6R)-5,10-methylene-5,6,7,8-tetrahydrofolate + NADPH + H(+). It participates in one-carbon metabolism; tetrahydrofolate interconversion. In Saccharomyces cerevisiae (strain ATCC 204508 / S288c) (Baker's yeast), this protein is Methylenetetrahydrofolate reductase 2 (MET13).